A 266-amino-acid chain; its full sequence is MKIGIFDSGLGGLSVLNEALKKLPNEEFLYYADRKNVPYGLKSKDEILKFSSHAVKFLIDQGANAIVIACNTATSAAINELRAKFDLPIIGMEPAVKKAADLNREGENSASLRTLVIATPLTVQGAKLKELIERVDSEHLVDVLALPRLVEFAENENFACDEVKEYLREEFAKFKLQNYCALVLGCTHFNYFKDSLREILPAGVSLIDGNEGTINKLISELSRLNLAHGKGQSVEYFYSDAKIYDNGELARIGRYLARLNKMLEIK.

Residues 7 to 8 (DS) and 39 to 40 (YG) each bind substrate. The active-site Proton donor/acceptor is the Cys-70. 71–72 (NT) serves as a coordination point for substrate. Catalysis depends on Cys-186, which acts as the Proton donor/acceptor. A substrate-binding site is contributed by 187–188 (TH).

The protein belongs to the aspartate/glutamate racemases family.

It carries out the reaction L-glutamate = D-glutamate. It participates in cell wall biogenesis; peptidoglycan biosynthesis. In terms of biological role, provides the (R)-glutamate required for cell wall biosynthesis. The protein is Glutamate racemase of Campylobacter curvus (strain 525.92).